The sequence spans 78 residues: DNA-directed RNA polymerase subunit omega (78 aa).

It belongs to the RNA polymerase subunit omega family. In terms of assembly, in cyanobacteria the RNAP catalytic core is composed of 2 alpha, 1 beta, 1 beta', 1 gamma and 1 omega subunit. When a sigma factor is associated with the core the holoenzyme is formed, which can initiate transcription.

It catalyses the reaction RNA(n) + a ribonucleoside 5'-triphosphate = RNA(n+1) + diphosphate. In terms of biological role, promotes RNA polymerase assembly. Latches the N- and C-terminal regions of the beta' subunit thereby facilitating its interaction with the beta and alpha subunits. This is DNA-directed RNA polymerase subunit omega from Prochlorococcus marinus (strain MIT 9312).